A 1464-amino-acid chain; its full sequence is Gag-Pol polyprotein (1464 aa).

A lipid anchor (N-myristoyl glycine; by host) is attached at Gly-2. An interaction with Gp41 region spans residues 7–31; it reads VLRGKKADELEKIRLRPSGKKKYRL. Residues 16 to 22 carry the Nuclear export signal motif; the sequence is LEKIRLR. Residues 26-32 carry the Nuclear localization signal motif; sequence KKKYRLK. Residues 108-146 form a disordered region; that stretch reads LGAETGTAEKMPSTSRPTAPPSGRGRNFPVQQTGGGNYI. The interaction with human PPIA/CYPA and NUP153 stretch occupies residues 192–229; that stretch reads NCVGDHQAAMQIIREIINDEAADWDAQHPIPGPLPAGQ. Residues 280 to 366 form a dimerization/Multimerization of capsid protein p24 region; sequence YNPTNILDVK…GGPGQKARLM (87 aa). CCHC-type zinc fingers lie at residues 390 to 407 and 411 to 428; these read IRCW…QCRA and QGCW…KCPE. The tract at residues 434–509 is disordered; sequence LRDGSMGKEA…GKSTSQRGDR (76 aa). Residues 459–468 are compositionally biased toward low complexity; it reads STPSRSSSGS. Residues 477 to 492 show a composition bias toward basic and acidic residues; it reads ERAEGAEGETIQRGDG. The tract at residues 514 to 518 is dimerization of protease; that stretch reads PQFSL. The Peptidase A2 domain maps to 533 to 602; the sequence is VEVLLDTGAD…TPINIFGRNI (70 aa). Asp-538 functions as the For protease activity; shared with dimeric partner in the catalytic mechanism. Dimerization of protease stretches follow at residues 562–568 and 601–613; these read GIGGFIN and NILT…LNLP. The 191-residue stretch at 656–846 folds into the Reverse transcriptase domain; it reads EGQLEEAPPT…PPLQWMGYEL (191 aa). Residues Asp-722, Asp-797, and Asp-798 each coordinate Mg(2+). The interval 839–847 is RT 'primer grip'; the sequence is LQWMGYELW. Positions 1009–1025 match the Tryptophan repeat motif motif; that stretch reads WEQWWDNYWQVTWIPEW. Residues 1045-1168 form the RNase H type-1 domain; the sequence is IPGAETFYTD…VDHLVSQGIR (124 aa). Mg(2+)-binding residues include Asp-1054, Glu-1089, Asp-1109, and Asp-1160. The Integrase-type zinc-finger motif lies at 1174–1215; that stretch reads ERIEPAQEEHEKYHSNMKELTHKFGIPQLVARQIVNTCAQCQ. Zn(2+)-binding residues include His-1183, His-1187, Cys-1211, and Cys-1214. Residues 1224-1375 enclose the Integrase catalytic domain; it reads QVNAEIGVWQ…TPAERLINMI (152 aa). Asp-1235, Asp-1287, and Glu-1323 together coordinate Mg(2+). The integrase-type DNA-binding region spans 1394-1441; it reads FQVYYREGRDQLWKGPGELLWKGDGAVIVKVGADIKVIPRRKAKIIRD.

In terms of assembly, homotrimer; further assembles as hexamers of trimers. Interacts with gp41 (via C-terminus). Interacts with host CALM1; this interaction induces a conformational change in the Matrix protein, triggering exposure of the myristate group. Interacts with host AP3D1; this interaction allows the polyprotein trafficking to multivesicular bodies during virus assembly. Part of the pre-integration complex (PIC) which is composed of viral genome, matrix protein, Vpr and integrase. Homodimer; the homodimer further multimerizes as homohexamers or homopentamers. Interacts with human PPIA/CYPA. Interacts with human NUP153. Interacts with host PDZD8; this interaction stabilizes the capsid. Interacts with monkey TRIM5; this interaction destabilizes the capsid. As to quaternary structure, homodimer, whose active site consists of two apposed aspartic acid residues. In terms of assembly, heterodimer of p66 RT and p51 RT (RT p66/p51). Heterodimerization of RT is essential for DNA polymerase activity. The overall folding of the subdomains is similar in p66 RT and p51 RT but the spatial arrangements of the subdomains are dramatically different. Homotetramer; may further associate as a homohexadecamer. Part of the pre-integration complex (PIC) which is composed of viral genome, matrix protein, Vpr and integrase. Interacts with human SMARCB1/INI1 and human PSIP1/LEDGF isoform 1. Interacts with human KPNA3; this interaction might play a role in nuclear import of the pre-integration complex. Interacts with human NUP153; this interaction might play a role in nuclear import of the pre-integration complex. The cofactor is Mg(2+). In terms of processing, specific enzymatic cleavages by the viral protease yield mature proteins. The protease is released by autocatalytic cleavage. The polyprotein is cleaved during and after budding, this process is termed maturation. Proteolytic cleavage of p66 RT removes the RNase H domain to yield the p51 RT subunit. Nucleocapsid protein p7 might be further cleaved after virus entry.

It is found in the host cell membrane. The protein resides in the host endosome. It localises to the host multivesicular body. Its subcellular location is the virion membrane. The protein localises to the host nucleus. It is found in the host cytoplasm. The protein resides in the virion. It catalyses the reaction Endopeptidase for which the P1 residue is preferably hydrophobic.. It carries out the reaction Endohydrolysis of RNA in RNA/DNA hybrids. Three different cleavage modes: 1. sequence-specific internal cleavage of RNA. Human immunodeficiency virus type 1 and Moloney murine leukemia virus enzymes prefer to cleave the RNA strand one nucleotide away from the RNA-DNA junction. 2. RNA 5'-end directed cleavage 13-19 nucleotides from the RNA end. 3. DNA 3'-end directed cleavage 15-20 nucleotides away from the primer terminus.. The catalysed reaction is 3'-end directed exonucleolytic cleavage of viral RNA-DNA hybrid.. The enzyme catalyses DNA(n) + a 2'-deoxyribonucleoside 5'-triphosphate = DNA(n+1) + diphosphate. Protease: The viral protease is inhibited by many synthetic protease inhibitors (PIs), such as amprenavir, atazanavir, indinavir, loprinavir, nelfinavir, ritonavir and saquinavir. Use of protease inhibitors in tritherapy regimens permit more ambitious therapeutic strategies. Reverse transcriptase/ribonuclease H: RT can be inhibited either by nucleoside RT inhibitors (NRTIs) or by non nucleoside RT inhibitors (NNRTIs). NRTIs act as chain terminators, whereas NNRTIs inhibit DNA polymerization by binding a small hydrophobic pocket near the RT active site and inducing an allosteric change in this region. Classical NRTIs are abacavir, adefovir (PMEA), didanosine (ddI), lamivudine (3TC), stavudine (d4T), tenofovir (PMPA), zalcitabine (ddC), and zidovudine (AZT). Classical NNRTIs are atevirdine (BHAP U-87201E), delavirdine, efavirenz (DMP-266), emivirine (I-EBU), and nevirapine (BI-RG-587). The tritherapies used as a basic effective treatment of AIDS associate two NRTIs and one NNRTI. Mediates, with Gag polyprotein, the essential events in virion assembly, including binding the plasma membrane, making the protein-protein interactions necessary to create spherical particles, recruiting the viral Env proteins, and packaging the genomic RNA via direct interactions with the RNA packaging sequence (Psi). Gag-Pol polyprotein may regulate its own translation, by the binding genomic RNA in the 5'-UTR. At low concentration, the polyprotein would promote translation, whereas at high concentration, the polyprotein would encapsidate genomic RNA and then shut off translation. Its function is as follows. Targets the polyprotein to the plasma membrane via a multipartite membrane-binding signal, that includes its myristoylated N-terminus. Matrix protein is part of the pre-integration complex. Implicated in the release from host cell mediated by Vpu. Binds to RNA. Functionally, forms the conical core that encapsulates the genomic RNA-nucleocapsid complex in the virion. Most core are conical, with only 7% tubular. The core is constituted by capsid protein hexamer subunits. The core is disassembled soon after virion entry. Host restriction factors such as TRIM5-alpha or TRIMCyp bind retroviral capsids and cause premature capsid disassembly, leading to blocks in reverse transcription. Capsid restriction by TRIM5 is one of the factors which restricts HIV-1 to the human species. Host PIN1 apparently facilitates the virion uncoating. On the other hand, interactions with PDZD8 or CYPA stabilize the capsid. In terms of biological role, encapsulates and protects viral dimeric unspliced genomic RNA (gRNA). Binds these RNAs through its zinc fingers. Acts as a nucleic acid chaperone which is involved in rearangement of nucleic acid secondary structure during gRNA retrotranscription. Also facilitates template switch leading to recombination. As part of the polyprotein, participates in gRNA dimerization, packaging, tRNA incorporation and virion assembly. Aspartyl protease that mediates proteolytic cleavages of Gag and Gag-Pol polyproteins during or shortly after the release of the virion from the plasma membrane. Cleavages take place as an ordered, step-wise cascade to yield mature proteins. This process is called maturation. Displays maximal activity during the budding process just prior to particle release from the cell. Also cleaves Nef and Vif, probably concomitantly with viral structural proteins on maturation of virus particles. Hydrolyzes host EIF4GI and PABP1 in order to shut off the capped cellular mRNA translation. The resulting inhibition of cellular protein synthesis serves to ensure maximal viral gene expression and to evade host immune response. Its function is as follows. Multifunctional enzyme that converts the viral RNA genome into dsDNA in the cytoplasm, shortly after virus entry into the cell. This enzyme displays a DNA polymerase activity that can copy either DNA or RNA templates, and a ribonuclease H (RNase H) activity that cleaves the RNA strand of RNA-DNA heteroduplexes in a partially processive 3' to 5' endonucleasic mode. Conversion of viral genomic RNA into dsDNA requires many steps. A tRNA(3)-Lys binds to the primer-binding site (PBS) situated at the 5'-end of the viral RNA. RT uses the 3' end of the tRNA primer to perform a short round of RNA-dependent minus-strand DNA synthesis. The reading proceeds through the U5 region and ends after the repeated (R) region which is present at both ends of viral RNA. The portion of the RNA-DNA heteroduplex is digested by the RNase H, resulting in a ssDNA product attached to the tRNA primer. This ssDNA/tRNA hybridizes with the identical R region situated at the 3' end of viral RNA. This template exchange, known as minus-strand DNA strong stop transfer, can be either intra- or intermolecular. RT uses the 3' end of this newly synthesized short ssDNA to perform the RNA-dependent minus-strand DNA synthesis of the whole template. RNase H digests the RNA template except for two polypurine tracts (PPTs) situated at the 5'-end and near the center of the genome. It is not clear if both polymerase and RNase H activities are simultaneous. RNase H probably can proceed both in a polymerase-dependent (RNA cut into small fragments by the same RT performing DNA synthesis) and a polymerase-independent mode (cleavage of remaining RNA fragments by free RTs). Secondly, RT performs DNA-directed plus-strand DNA synthesis using the PPTs that have not been removed by RNase H as primers. PPTs and tRNA primers are then removed by RNase H. The 3' and 5' ssDNA PBS regions hybridize to form a circular dsDNA intermediate. Strand displacement synthesis by RT to the PBS and PPT ends produces a blunt ended, linear dsDNA copy of the viral genome that includes long terminal repeats (LTRs) at both ends. Functionally, catalyzes viral DNA integration into the host chromosome, by performing a series of DNA cutting and joining reactions. This enzyme activity takes place after virion entry into a cell and reverse transcription of the RNA genome in dsDNA. The first step in the integration process is 3' processing. This step requires a complex comprising the viral genome, matrix protein, Vpr and integrase. This complex is called the pre-integration complex (PIC). The integrase protein removes 2 nucleotides from each 3' end of the viral DNA, leaving recessed CA OH's at the 3' ends. In the second step, the PIC enters cell nucleus. This process is mediated through integrase and Vpr proteins, and allows the virus to infect a non dividing cell. This ability to enter the nucleus is specific of lentiviruses, other retroviruses cannot and rely on cell division to access cell chromosomes. In the third step, termed strand transfer, the integrase protein joins the previously processed 3' ends to the 5' ends of strands of target cellular DNA at the site of integration. The 5'-ends are produced by integrase-catalyzed staggered cuts, 5 bp apart. A Y-shaped, gapped, recombination intermediate results, with the 5'-ends of the viral DNA strands and the 3' ends of target DNA strands remaining unjoined, flanking a gap of 5 bp. The last step is viral DNA integration into host chromosome. This involves host DNA repair synthesis in which the 5 bp gaps between the unjoined strands are filled in and then ligated. Since this process occurs at both cuts flanking the HIV genome, a 5 bp duplication of host DNA is produced at the ends of HIV-1 integration. Alternatively, Integrase may catalyze the excision of viral DNA just after strand transfer, this is termed disintegration. The protein is Gag-Pol polyprotein (gag-pol) of Homo sapiens (Human).